A 304-amino-acid polypeptide reads, in one-letter code: UDP-3-O-acyl-N-acetylglucosamine deacetylase (304 aa).

Histidine 79, histidine 238, and aspartate 242 together coordinate Zn(2+). Catalysis depends on histidine 265, which acts as the Proton donor.

The protein belongs to the LpxC family. Zn(2+) serves as cofactor.

The catalysed reaction is a UDP-3-O-[(3R)-3-hydroxyacyl]-N-acetyl-alpha-D-glucosamine + H2O = a UDP-3-O-[(3R)-3-hydroxyacyl]-alpha-D-glucosamine + acetate. Its pathway is glycolipid biosynthesis; lipid IV(A) biosynthesis; lipid IV(A) from (3R)-3-hydroxytetradecanoyl-[acyl-carrier-protein] and UDP-N-acetyl-alpha-D-glucosamine: step 2/6. Functionally, catalyzes the hydrolysis of UDP-3-O-myristoyl-N-acetylglucosamine to form UDP-3-O-myristoylglucosamine and acetate, the committed step in lipid A biosynthesis. This is UDP-3-O-acyl-N-acetylglucosamine deacetylase from Chromobacterium violaceum (strain ATCC 12472 / DSM 30191 / JCM 1249 / CCUG 213 / NBRC 12614 / NCIMB 9131 / NCTC 9757 / MK).